Here is a 387-residue protein sequence, read N- to C-terminus: EARP-interacting protein homolog (387 aa).

5 WD repeats span residues 132 to 172 (TAHG…SKAV), 182 to 222 (KGQL…QIYC), 226 to 266 (AHGQ…DPVK), 270 to 310 (EHSH…SEPF), and 345 to 385 (EHED…KYHI).

This sequence belongs to the WD repeat EIPR1 family.

This is EARP-interacting protein homolog from Gekko japonicus (Schlegel's Japanese gecko).